The sequence spans 67 residues: Large ribosomal subunit protein bL35 (67 aa).

The protein belongs to the bacterial ribosomal protein bL35 family.

This is Large ribosomal subunit protein bL35 from Methylorubrum populi (strain ATCC BAA-705 / NCIMB 13946 / BJ001) (Methylobacterium populi).